A 258-amino-acid chain; its full sequence is MTLKARVIPCLDVKDGRVVKGVNFVDLIDAGDPVEAARAYDAAGADELCFLDITASSDNRETIFDVIARTAEQCFMPLTVGGGVRQVSDIRKLLLAGADKVSINTAAVKNPDFVAEAADKFGDQCIVVAIDAKKVSDPGETDRWEIFTHGGRQPTGMDAVEFARKVVDLGAGEILLTSMDRDGTKSGYDISLTRTIADAVRAPVIASGGVGTLDHLVEGIRDGHATAVLAASIFHFGTYSIGEAKRHMAEHGVAMRLD.

Residues aspartate 12 and aspartate 131 contribute to the active site.

Belongs to the HisA/HisF family. In terms of assembly, heterodimer of HisH and HisF.

It localises to the cytoplasm. It carries out the reaction 5-[(5-phospho-1-deoxy-D-ribulos-1-ylimino)methylamino]-1-(5-phospho-beta-D-ribosyl)imidazole-4-carboxamide + L-glutamine = D-erythro-1-(imidazol-4-yl)glycerol 3-phosphate + 5-amino-1-(5-phospho-beta-D-ribosyl)imidazole-4-carboxamide + L-glutamate + H(+). Its pathway is amino-acid biosynthesis; L-histidine biosynthesis; L-histidine from 5-phospho-alpha-D-ribose 1-diphosphate: step 5/9. IGPS catalyzes the conversion of PRFAR and glutamine to IGP, AICAR and glutamate. The HisF subunit catalyzes the cyclization activity that produces IGP and AICAR from PRFAR using the ammonia provided by the HisH subunit. The polypeptide is Imidazole glycerol phosphate synthase subunit HisF (Sinorhizobium medicae (strain WSM419) (Ensifer medicae)).